The following is a 128-amino-acid chain: Holo-[acyl-carrier-protein] synthase (128 aa).

Mg(2+)-binding residues include Asp8 and Glu60.

This sequence belongs to the P-Pant transferase superfamily. AcpS family. Mg(2+) is required as a cofactor.

The protein resides in the cytoplasm. The enzyme catalyses apo-[ACP] + CoA = holo-[ACP] + adenosine 3',5'-bisphosphate + H(+). Its function is as follows. Transfers the 4'-phosphopantetheine moiety from coenzyme A to a Ser of acyl-carrier-protein. The protein is Holo-[acyl-carrier-protein] synthase of Anaeromyxobacter dehalogenans (strain 2CP-C).